The primary structure comprises 190 residues: Protein LIGHT-DEPENDENT SHORT HYPOCOTYLS 1 (190 aa).

Residues 1–26 (MDLISHQPNKNPNSSTQLTPPSSSRY) are compositionally biased toward polar residues. Disordered stretches follow at residues 1 to 28 (MDLI…RYEN) and 145 to 190 (GVSY…GATV). In terms of domain architecture, ALOG spans 25–152 (RYENQKRRDW…ARGVSYEKKR (128 aa)). The Nuclear localization signal signature appears at 150-154 (KKRKR). Over residues 158–179 (QKPQTQPPLQLQQQQQQPQQGQ) the composition is skewed to low complexity. Polar residues predominate over residues 180-190 (SMMANYSGATV).

It belongs to the plant homeotic and developmental regulators ALOG protein family. Expressed in hypocotyls, shoot apices and lateral root primordia and, weakly, in vascular tissues.

It is found in the nucleus. Probable transcription regulator that acts as a developmental regulator by promoting cell growth in response to continuous red (cR), far-red (cFR) and blue (cB) light in a phytochrome-dependent manner, at least during seedling development. This Arabidopsis thaliana (Mouse-ear cress) protein is Protein LIGHT-DEPENDENT SHORT HYPOCOTYLS 1 (LSH1).